A 227-amino-acid chain; its full sequence is Orotidine 5'-phosphate decarboxylase (227 aa).

Residues Asp12, Lys34, Asp61–Thr70, Thr117, Arg178, Gln187, Gly207, and Arg208 contribute to the substrate site. The Proton donor role is filled by Lys63.

It belongs to the OMP decarboxylase family. Type 1 subfamily. As to quaternary structure, homodimer.

It catalyses the reaction orotidine 5'-phosphate + H(+) = UMP + CO2. The protein operates within pyrimidine metabolism; UMP biosynthesis via de novo pathway; UMP from orotate: step 2/2. Functionally, catalyzes the decarboxylation of orotidine 5'-monophosphate (OMP) to uridine 5'-monophosphate (UMP). The polypeptide is Orotidine 5'-phosphate decarboxylase (Anaeromyxobacter sp. (strain K)).